The sequence spans 844 residues: Putative ubiquitin thioesterase 232R (844 aa).

4 disordered regions span residues 136–223, 261–287, 326–377, and 422–541; these read NSST…DEAE, SRRKSPSPSPVPPSTRCDPTTTAPPME, LLNG…PELT, and QKKQ…KLSV. Positions 137 to 216 are enriched in low complexity; the sequence is SSTRSRSPSV…PSRQSVRQSS (80 aa). Composition is skewed to low complexity over residues 332 to 341 and 354 to 364; these read RPSPSLPQSR and RSPSVGSPSVR. A compositionally biased stretch (pro residues) spans 429–438; the sequence is SPSPTPPSPV. The span at 472 to 485 shows a compositional bias: basic and acidic residues; it reads VQKKMGKSGEREPK. Positions 504 to 518 are enriched in low complexity; that stretch reads SLRSRLSTQQQTQQS. The segment covering 526–535 has biased composition (basic and acidic residues); sequence ESIKPEESVR. The 136-residue stretch at 590-725 folds into the OTU domain; the sequence is YTVKQVSGDG…NYHYTSLVPI (136 aa). Asp598 is a catalytic residue. Cys601 acts as the Nucleophile in catalysis. The active site involves His718.

The catalysed reaction is Thiol-dependent hydrolysis of ester, thioester, amide, peptide and isopeptide bonds formed by the C-terminal Gly of ubiquitin (a 76-residue protein attached to proteins as an intracellular targeting signal).. Hydrolase that can remove conjugated ubiquitin from proteins and may therefore play an important regulatory role at the level of protein turnover by preventing degradation. The sequence is that of Putative ubiquitin thioesterase 232R from Aedes vexans (Inland floodwater mosquito).